Reading from the N-terminus, the 4466-residue chain is Dynein beta chain, ciliary (4466 aa).

The tract at residues 1-1813 (MGDVVDARLD…YANICDAQFK (1813 aa)) is stem. Position 154-161 (154-161 (AGQVKGKT)) interacts with ATP. Coiled-coil stretches lie at residues 482 to 502 (QEFLEDYEEFEKKVFDLDRRL), 627 to 643 (QKYEEMLNLLNKYEQKV), 734 to 805 (VLEV…WTKQ), 1036 to 1056 (TLDQFKEQVDTYEKIYSEADE), 1306 to 1337 (WLEINVEQMEMDCKKFAKDIRSLDKEMRAWDA), and 1443 to 1468 (LLKSNEELIETLEDNQVQLQNLMTSK). 4 AAA regions span residues 1814–2035 (YSYE…VLVV), 2095–2316 (KVVK…IRFK), 2422–2669 (ELDP…VFQG), and 2767–3016 (TYNE…ERRY). ATP contacts are provided by residues 1852-1859 (GPAGTGKT), 2133-2140 (GNAGTGKS), 2460-2467 (GNAGLGKS), and 2805-2812 (GVGGSGKQ). Coiled coils occupy residues 3033–3134 (SLLA…AKAE), 3263–3325 (EPKR…SRTI), and 3573–3642 (QERP…EEAK). Positions 3033–3325 (SLLAMKSKEL…QEAEATSRTI (293 aa)) are stalk. AAA regions lie at residues 3409–3636 (LTDD…EISV) and 3846–4072 (VRNF…VLYN).

Belongs to the dynein heavy chain family. In terms of assembly, consists of at least two heavy chains (alpha and beta), three intermediate chains and several light chains.

The protein resides in the cell projection. It is found in the cilium. Its subcellular location is the flagellum. The protein localises to the cytoplasm. It localises to the cytoskeleton. The protein resides in the flagellum axoneme. Force generating protein of eukaryotic cilia and flagella. Produces force towards the minus ends of microtubules. Dynein has ATPase activity; the force-producing power stroke is thought to occur on release of ADP. The polypeptide is Dynein beta chain, ciliary (Heliocidaris crassispina (Sea urchin)).